Reading from the N-terminus, the 241-residue chain is Glucosamine-6-phosphate deaminase (241 aa).

D67 (proton acceptor; for enolization step) is an active-site residue. The active-site For ring-opening step is the N136. The active-site Proton acceptor; for ring-opening step is the H138. The For ring-opening step role is filled by E143.

Belongs to the glucosamine/galactosamine-6-phosphate isomerase family. NagB subfamily.

The enzyme catalyses alpha-D-glucosamine 6-phosphate + H2O = beta-D-fructose 6-phosphate + NH4(+). It participates in amino-sugar metabolism; N-acetylneuraminate degradation; D-fructose 6-phosphate from N-acetylneuraminate: step 5/5. Functionally, catalyzes the reversible isomerization-deamination of glucosamine 6-phosphate (GlcN6P) to form fructose 6-phosphate (Fru6P) and ammonium ion. The protein is Glucosamine-6-phosphate deaminase of Clostridium acetobutylicum (strain ATCC 824 / DSM 792 / JCM 1419 / IAM 19013 / LMG 5710 / NBRC 13948 / NRRL B-527 / VKM B-1787 / 2291 / W).